The chain runs to 89 residues: Large ribosomal subunit protein bL27 (89 aa).

The interval 1 to 20 (MAHKKAGGSSRNGRDSESKR) is disordered.

Belongs to the bacterial ribosomal protein bL27 family.

In Bartonella bacilliformis (strain ATCC 35685 / KC583 / Herrer 020/F12,63), this protein is Large ribosomal subunit protein bL27.